Consider the following 308-residue polypeptide: Porphobilinogen deaminase (308 aa).

An S-(dipyrrolylmethanemethyl)cysteine modification is found at Cys240.

The protein belongs to the HMBS family. As to quaternary structure, monomer. The cofactor is dipyrromethane.

It carries out the reaction 4 porphobilinogen + H2O = hydroxymethylbilane + 4 NH4(+). It participates in porphyrin-containing compound metabolism; protoporphyrin-IX biosynthesis; coproporphyrinogen-III from 5-aminolevulinate: step 2/4. In terms of biological role, tetrapolymerization of the monopyrrole PBG into the hydroxymethylbilane pre-uroporphyrinogen in several discrete steps. The chain is Porphobilinogen deaminase from Campylobacter lari (strain RM2100 / D67 / ATCC BAA-1060).